Here is a 511-residue protein sequence, read N- to C-terminus: MEKFEGYSEKHKSRQQYFVYPLLFQEYIYAFAHDYGLNGSEPVEIVSCNNKKFSSLLVKRLIIRMYQQNFWDKSVNHPNQDRLLDYKNYFYSEFYSQILSEGFAIVVEIPFSLRELSCPKEKEIPKFQNLRSIHSIFPFLEDKFLHLDYLSHIEIPYPIHLEILVQLLQYRIQDVPSLHLLRFFLNYYSNWNSFITSMKSIFLFKKENKRLFRFLYNSYVSEYEFFLLFLRKQSSCLPLASSGTFLERIHFSRKMEHFGIMYPGFSRKTLWFFMDPLMHYVRYQGKAILASKGTFFLKKKWKCYLINFWQYYFCFWTQPRRIHINQLANSCFDFLGYLSSVPKSPLLVRNQMLENSFLIDTRMKKFDTIVPATPLIGYLSKAEFCTGSGHPISKPIWTDLSDWDILDRFGRICRNLFHYHSGSSKKRTLYRLKYILRLSCARTLARKHKSTVRTFMQRLGSAFLEEFFTEEEQVFSLMFTKTTLFSFCGSHTERIWYLDIIRINDLVNPLN.

It belongs to the intron maturase 2 family. MatK subfamily.

It is found in the plastid. The protein resides in the chloroplast. In terms of biological role, usually encoded in the trnK tRNA gene intron. Probably assists in splicing its own and other chloroplast group II introns. The polypeptide is Maturase K (Psathyrostachys juncea (Russian wildrye)).